Here is a 397-residue protein sequence, read N- to C-terminus: S-adenosylmethionine synthase (397 aa).

His-15 is an ATP binding site. Position 17 (Asp-17) interacts with Mg(2+). Glu-43 serves as a coordination point for K(+). L-methionine-binding residues include Glu-56 and Gln-99. Residues 99–109 form a flexible loop region; it reads QSPDIAQGVTA. Residues 173 to 175, 242 to 243, Asp-251, 257 to 258, Ala-274, and Lys-278 each bind ATP; these read DGK, KF, and RK. An L-methionine-binding site is contributed by Asp-251. Lys-282 is an L-methionine binding site.

This sequence belongs to the AdoMet synthase family. Homotetramer; dimer of dimers. Requires Mg(2+) as cofactor. The cofactor is K(+).

The protein resides in the cytoplasm. The catalysed reaction is L-methionine + ATP + H2O = S-adenosyl-L-methionine + phosphate + diphosphate. Its pathway is amino-acid biosynthesis; S-adenosyl-L-methionine biosynthesis; S-adenosyl-L-methionine from L-methionine: step 1/1. In terms of biological role, catalyzes the formation of S-adenosylmethionine (AdoMet) from methionine and ATP. The overall synthetic reaction is composed of two sequential steps, AdoMet formation and the subsequent tripolyphosphate hydrolysis which occurs prior to release of AdoMet from the enzyme. The polypeptide is S-adenosylmethionine synthase (Cutibacterium acnes (strain DSM 16379 / KPA171202) (Propionibacterium acnes)).